The chain runs to 368 residues: Quinolinate synthase (368 aa).

2 residues coordinate iminosuccinate: H46 and S63. Residue C110 participates in [4Fe-4S] cluster binding. Iminosuccinate-binding positions include Y141–N143 and S162. C230 contributes to the [4Fe-4S] cluster binding site. Residues H256–E258 and T273 each bind iminosuccinate. C320 serves as a coordination point for [4Fe-4S] cluster.

It belongs to the quinolinate synthase family. Type 3 subfamily. [4Fe-4S] cluster serves as cofactor.

The protein localises to the cytoplasm. It carries out the reaction iminosuccinate + dihydroxyacetone phosphate = quinolinate + phosphate + 2 H2O + H(+). It participates in cofactor biosynthesis; NAD(+) biosynthesis; quinolinate from iminoaspartate: step 1/1. Its function is as follows. Catalyzes the condensation of iminoaspartate with dihydroxyacetone phosphate to form quinolinate. The chain is Quinolinate synthase from Bacillus thuringiensis subsp. konkukian (strain 97-27).